A 132-amino-acid polypeptide reads, in one-letter code: Ribosome-binding factor A (132 aa).

This sequence belongs to the RbfA family. In terms of assembly, monomer. Binds 30S ribosomal subunits, but not 50S ribosomal subunits or 70S ribosomes.

The protein localises to the cytoplasm. In terms of biological role, one of several proteins that assist in the late maturation steps of the functional core of the 30S ribosomal subunit. Associates with free 30S ribosomal subunits (but not with 30S subunits that are part of 70S ribosomes or polysomes). Required for efficient processing of 16S rRNA. May interact with the 5'-terminal helix region of 16S rRNA. In Burkholderia lata (strain ATCC 17760 / DSM 23089 / LMG 22485 / NCIMB 9086 / R18194 / 383), this protein is Ribosome-binding factor A.